Here is a 336-residue protein sequence, read N- to C-terminus: DNA polymerase beta (336 aa).

Residues lysine 59, leucine 61, and valine 64 each coordinate K(+). Na(+)-binding residues include lysine 59, leucine 61, and valine 64. The Nucleophile; Schiff-base intermediate with DNA; for 5'-dRP lyase activity role is filled by lysine 71. Omega-N-methylarginine; by PRMT6 is present on arginine 82. Residues threonine 100, valine 102, and isoleucine 105 each coordinate K(+). Na(+)-binding residues include threonine 100, valine 102, and isoleucine 105. Arginine 148 provides a ligand contact to a 2'-deoxyribonucleoside 5'-triphosphate. Arginine 151 is modified (omega-N-methylarginine; by PRMT6). Serine 179, arginine 182, glycine 188, and aspartate 189 together coordinate a 2'-deoxyribonucleoside 5'-triphosphate. Residues 182 to 191 (RGAESSGDID) are DNA-binding. Residues aspartate 189, aspartate 191, and aspartate 257 each coordinate Mg(2+).

Belongs to the DNA polymerase type-X family. The cofactor is Mg(2+). Methylation by PRMT6 stimulates the polymerase activity by enhancing DNA binding and processivity. In terms of processing, ubiquitinated: monoubiquitinated by huwe1/arf-bp1. Monoubiquitinated protein is then the target of stub1/chip, which catalyzes polyubiquitination from monoubiquitin, leading to degradation by the proteasome. usp47 mediates the deubiquitination of monoubiquitinated protein, preventing polyubiquitination by STUB1/CHIP and its subsequent degradation.

Its subcellular location is the nucleus. It is found in the cytoplasm. The catalysed reaction is DNA(n) + a 2'-deoxyribonucleoside 5'-triphosphate = DNA(n+1) + diphosphate. The enzyme catalyses a 5'-end 2'-deoxyribose-2'-deoxyribonucleotide-DNA = (2E,4S)-4-hydroxypenten-2-al-5-phosphate + a 5'-end 5'-phospho-2'-deoxyribonucleoside-DNA + H(+). It carries out the reaction 2'-deoxyribonucleotide-(2'-deoxyribose 5'-phosphate)-2'-deoxyribonucleotide-DNA = a 3'-end 2'-deoxyribonucleotide-(2,3-dehydro-2,3-deoxyribose 5'-phosphate)-DNA + a 5'-end 5'-phospho-2'-deoxyribonucleoside-DNA + H(+). Repair polymerase that plays a key role in base-excision repair. During this process, the damaged base is excised by specific DNA glycosylases, the DNA backbone is nicked at the abasic site by an apurinic/apyrimidic (AP) endonuclease, and POLB removes 5'-deoxyribose-phosphate from the preincised AP site acting as a 5'-deoxyribose-phosphate lyase (5'-dRP lyase); through its DNA polymerase activity, it adds one nucleotide to the 3' end of the arising single-nucleotide gap. Conducts 'gap-filling' DNA synthesis in a stepwise distributive fashion rather than in a processive fashion as for other DNA polymerases. It is also able to cleave sugar-phosphate bonds 3' to an intact AP site, acting as an AP lyase. The protein is DNA polymerase beta (polb) of Danio rerio (Zebrafish).